Reading from the N-terminus, the 233-residue chain is tRNA (guanine-N(7)-)-methyltransferase (233 aa).

Residues 1–22 form a disordered region; that stretch reads MIDENHPMRAAGNFFGRRHGKP. 4 residues coordinate S-adenosyl-L-methionine: Glu64, Glu89, Asp116, and Asp138. Residue Asp138 is part of the active site. Substrate is bound by residues Lys142, Asp174, and 212–215; that span reads TRYE.

The protein belongs to the class I-like SAM-binding methyltransferase superfamily. TrmB family.

It carries out the reaction guanosine(46) in tRNA + S-adenosyl-L-methionine = N(7)-methylguanosine(46) in tRNA + S-adenosyl-L-homocysteine. The protein operates within tRNA modification; N(7)-methylguanine-tRNA biosynthesis. Its function is as follows. Catalyzes the formation of N(7)-methylguanine at position 46 (m7G46) in tRNA. The sequence is that of tRNA (guanine-N(7)-)-methyltransferase from Brucella abortus (strain 2308).